The following is a 451-amino-acid chain: Cobalamin reductase PduS (451 aa).

2 4Fe-4S ferredoxin-type domains span residues 255–284 and 300–330; these read TVLS…HELS and PQLL…MRIN. Cysteine 264, cysteine 267, cysteine 270, cysteine 274, cysteine 309, cysteine 312, cysteine 315, and cysteine 320 together coordinate [4Fe-4S] cluster.

It belongs to the PduS cobalamin reductase family. Monomer, forms a complex with PduO. Interacts with PduT, probably via the N-terminus of PduS. [4Fe-4S] cluster is required as a cofactor. FMN serves as cofactor.

The protein resides in the bacterial microcompartment. The protein operates within polyol metabolism; 1,2-propanediol degradation. A bifunctional cobalamin reductase that converts cob(III)alamin to cob(II)alamin and then to cob(I)alamin in the bacterial microcompartment (BMC) dedicated to 1,2-propanediol (1,2-PD) degradation. PduS and PduO allow regeneration of the adenosylcobalamin cofactor within the BMC. Cobalamin reduction probably occurs spontaneously in the presence of free reduced flavin nucleotides, this protein may be involved in electron transfer for this reduction. Its function is as follows. Expression of a cosmid containing the full 21-gene pdu operon in E.coli allows E.coli to grow on 1,2-propanediol (1,2-PD) with the appearance of BMCs in its cytoplasm. In terms of biological role, the 1,2-PD-specific bacterial microcompartment (BMC) concentrates low levels of 1,2-PD catabolic enzymes, concentrates volatile reaction intermediates thus enhancing pathway flux and keeps the level of toxic, mutagenic propionaldehyde low. This is Cobalamin reductase PduS from Citrobacter freundii.